A 173-amino-acid chain; its full sequence is Photosystem I assembly protein Ycf3 (173 aa).

TPR repeat units follow at residues 35–68 (AYIY…EENK), 72–105 (GETL…NPKQ), and 120–153 (GRNA…YPGG).

Belongs to the Ycf3 family.

The protein localises to the cellular thylakoid membrane. Essential for the assembly of the photosystem I (PSI) complex. May act as a chaperone-like factor to guide the assembly of the PSI subunits. The protein is Photosystem I assembly protein Ycf3 of Prochlorococcus marinus (strain MIT 9301).